We begin with the raw amino-acid sequence, 66 residues long: ATP synthase F(0) complex subunit 8 (66 aa).

Residues T8–F24 form a helical membrane-spanning segment. Position 54 is an N6-acetyllysine; alternate (K54). K54 carries the post-translational modification N6-succinyllysine; alternate. N6-acetyllysine is present on K57.

The protein belongs to the ATPase protein 8 family. As to quaternary structure, component of the ATP synthase complex composed at least of ATP5F1A/subunit alpha, ATP5F1B/subunit beta, ATP5MC1/subunit c (homooctomer), MT-ATP6/subunit a, MT-ATP8/subunit 8, ATP5ME/subunit e, ATP5MF/subunit f, ATP5MG/subunit g, ATP5MK/subunit k, ATP5MJ/subunit j, ATP5F1C/subunit gamma, ATP5F1D/subunit delta, ATP5F1E/subunit epsilon, ATP5PF/subunit F6, ATP5PB/subunit b, ATP5PD/subunit d, ATP5PO/subunit OSCP. ATP synthase complex consists of a soluble F(1) head domain (subunits alpha(3) and beta(3)) - the catalytic core - and a membrane F(0) domain - the membrane proton channel (subunits c, a, 8, e, f, g, k and j). These two domains are linked by a central stalk (subunits gamma, delta, and epsilon) rotating inside the F1 region and a stationary peripheral stalk (subunits F6, b, d, and OSCP). Interacts with PRICKLE3.

The protein resides in the mitochondrion membrane. Subunit 8, of the mitochondrial membrane ATP synthase complex (F(1)F(0) ATP synthase or Complex V) that produces ATP from ADP in the presence of a proton gradient across the membrane which is generated by electron transport complexes of the respiratory chain. ATP synthase complex consist of a soluble F(1) head domain - the catalytic core - and a membrane F(1) domain - the membrane proton channel. These two domains are linked by a central stalk rotating inside the F(1) region and a stationary peripheral stalk. During catalysis, ATP synthesis in the catalytic domain of F(1) is coupled via a rotary mechanism of the central stalk subunits to proton translocation. In vivo, can only synthesize ATP although its ATP hydrolase activity can be activated artificially in vitro. Part of the complex F(0) domain. This Bos mutus grunniens (Wild yak) protein is ATP synthase F(0) complex subunit 8.